The following is a 1038-amino-acid chain: Subtilisin-like protease SBT6.1 (1038 aa).

The first 30 residues, 1–30 (MKVLGEASSYPYRSCIIVVFLSVSLFWLRP), serve as a signal peptide directing secretion. Residues 31–181 (STYHPQQQNL…TTLNWSRHLL (151 aa)) constitute a propeptide, removed in mature form. N-linked (GlcNAc...) asparagine glycans are attached at residues Asn-44, Asn-52, Asn-171, and Asn-175. The 299-residue stretch at 175 to 473 (NWSRHLLAQK…VDLLESYEIL (299 aa)) folds into the Peptidase S8 domain. At 182–1000 (AQKTQVTSMF…IDMPFLVPTR (819 aa)) the chain is on the lumenal side. Residue Asp-212 is the Charge relay system of the active site. Asn-230 is a glycosylation site (N-linked (GlcNAc...) asparagine). The active-site Charge relay system is the His-243. N-linked (GlcNAc...) asparagine glycosylation occurs at Asn-300. Ser-409 serves as the catalytic Charge relay system. Asn-513, Asn-579, Asn-902, and Asn-954 each carry an N-linked (GlcNAc...) asparagine glycan. Residues 1001-1021 (WIVLAGVVASGVLVLLSIWRI) form a helical membrane-spanning segment. Over 1022–1038 (RQKRGRRRRASGSNRLA) the chain is Cytoplasmic.

Belongs to the peptidase S8 family. As to quaternary structure, interacts with PME1 and PME5. In terms of tissue distribution, expressed in the vasculature of roots, cotyledons and leaves.

The protein localises to the golgi apparatus membrane. Functionally, serine protease that catalyzes the first step (site-1 cleavage) in the proteolytic activation of various factors, prior to site-2 cleavage. Part of a regulated intramembrane proteolysis (RIP) cascade. Cleaves BZIP17 and BZIP28 after the Arg-Arg-Ile-Leu (RRIL) motif. May cleave BZIP49 after the RRIL motif. Targets the membrane-associated BZIP17 factor, which functions as a stress sensor and transducer in a signaling pathway that resembles an ER stress response. Following salt stress, BZIP17 is cleaved by SBT6.1 (S1P) and S2P at the C-terminus and the N-terminal bZIP component is translocated to the nucleus, where it activates the expression of salt stress response genes. Cleaves the pectinesterases PME1 after the Arg-Arg-Leu-Met (RRLM) and Arg-Arg-Leu-Leu (RRLL) motifs, and PME5 after the Arg-Arg-Leu-Leu (RRLL) and Arg-Lys-Leu-Met (RKLM) motifs. This processing and C-terminus release occurs in the Golgi apparatus and is required for cell wall targeting of pectinesterases. Thus, SBT6.1 mediates the regulated release of mature pectinesterases from the Golgi. Cleaves the peptide growth factor RALF23 after the Arg-Arg-Ile-Leu (RRIL) motif. This processing is required for RALF23 function in the negative regulation of brassinolide (BL)-mediated signaling pathway (e.g. BL-induced hypocotyl elongation and branching limitation). The protein is Subtilisin-like protease SBT6.1 of Arabidopsis thaliana (Mouse-ear cress).